The sequence spans 355 residues: MFPSLQSFAKKVLARHHVSIDYHYILKHCGLWWYKAPISLDCKHMLIKLPSFADGLDLNTALMLATKENNYQLIKLFTEWGADINYGLICANTPPVREFCWELGAKYQVDKNKVMHMFFKLIHHGTTSSNIILCLKLFNNNPFPTYVIIREIKSSIYWKLRRLVEDTDILSNMSDDDMLTIYCFILALQDNLREAISYFYQHFKHLNTWWLICALCFNKLFDLHDLYEKEKIRMDMDEMMCIACTKDNNFLTIYYCFLLGANINQAMLACVQFYNMDNLFFCIDLGADAFEEAKALADQRNYFLMYHRLSIDIYSPDSSLLTLKEADPKKIYHLLKNYKSKNMMVYFDYDGHDTV.

An ANK repeat occupies 57–89 (DLNTALMLATKENNYQLIKLFTEWGADINYGLI).

Belongs to the asfivirus MGF 360 family.

In terms of biological role, plays a role in virus cell tropism, and may be required for efficient virus replication in macrophages. The protein is Protein MGF 360-10L of African swine fever virus (isolate Tick/Malawi/Lil 20-1/1983) (ASFV).